We begin with the raw amino-acid sequence, 329 residues long: Synaptonemal complex central element protein 1 (329 aa).

Residues 1 to 33 form a disordered region; sequence MATRPQPLSVEPEGSADLLHGPEGARGRRGSTQ. Coiled-coil stretches lie at residues 28 to 168 and 194 to 294; these read RRGS…ETLM and KEQL…ILAQ. The segment at 295–329 is disordered; it reads IQSTQKEEDSSWRTASPKPLEAHKETVQERPSSRT. Positions 314 to 329 are enriched in basic and acidic residues; it reads LEAHKETVQERPSSRT.

The protein belongs to the SYCE family. In terms of assembly, homodimer. Found in a complex with SYCP1 and SYCE2. Interacts with SYCP1, SYCE2 and SYCE3. Interacts with SIX6OS1.

The protein localises to the nucleus. The protein resides in the chromosome. In terms of biological role, major component of the transverse central element of synaptonemal complexes (SCS), formed between homologous chromosomes during meiotic prophase. Requires SYCP1 in order to be incorporated into the central element. May have a role in the synaptonemal complex assembly, stabilization and recombination. This chain is Synaptonemal complex central element protein 1 (Syce1), found in Rattus norvegicus (Rat).